The primary structure comprises 921 residues: MDYKDTLLLPNTTFAMRANLAELEPKRFDKWFENNYAYEKMKQKRQGVSESFTLHDGPPYANGHLHIGHALNKILKDIIIKMHYFQGKKVRFTPGWDCHGLPIEQQVEVKLKDKKQNLSKKQIRELCREHAREFVNIQRDEFKSLGVIADWDEPYLTMKNAFEADIYKALCKIAKKGLLLERSKPVFWSWAAKSALAEAEVEYEEKEDYSIYVAFNLDEASCKKLGVENAKAVIWTTTPWTLPANQAISLNPNEKYIITKEGYIFAKALLENMINKNFTQGEIQKELLGSEFENLSAINPLNQRKSTLILGEHVLMDGGTGLVHTAPGHGEDDYYACLKYNIEVIMPVDDGGYYDETLRAKGLLPEHLLAEFIGLHIFKANERILELLGEALLESSKFTHSYPFCWRTHKPVIYRATKQWFILMDEKKLDGKSLRELALEQLNSVKFYPESGVKRLSSMIENRPDWCISRQRDWGVPIAFFRDKKSQEVIFDDDVLDHLVGIFEKNGADAWWDLEIKDLLPPNSKYNPNNLEKVYDILDVWFDSGSTWEAVLNSARYDAGEYQASMYLEGSDQHRGWFQSSLLISTAINHKTPYKNILTHGFTVDEKGQKMSKSKGNVVLPQNVAKNYGVEILRLWIMLSDYSTDLKISDNILKQVSEQYRKIRNTIRFLLANTNDIEFVETKNFTLLDKWILMRAKIAFEICENAFEKYEFSKGFSVLLNFLSADLSGIYLDICKDRLYCNAKDDSKRVSAQSAMVLIARKLFALLAPSLTYTIDEALEHANVAIKENAKDVFDLLNKQGFEYEYKIEDELFIKSREKFFEIIDGLKKDKIIKSTLELSLQTSANELLSEDLEEIADWFMVSVVESIDEQKALAEFKIDNIGFKIVKSSLNKCPRCWKFLAKEDGCLCPRCNGVEKAKNV.

The 'HIGH' region signature appears at Pro-59–His-69. An L-isoleucyl-5'-AMP-binding site is contributed by Glu-569. The short motif at Lys-610–Ser-614 is the 'KMSKS' region element. Residue Lys-613 participates in ATP binding. The Zn(2+) site is built by Cys-894, Cys-897, Cys-909, and Cys-912.

Belongs to the class-I aminoacyl-tRNA synthetase family. IleS type 1 subfamily. In terms of assembly, monomer. Zn(2+) is required as a cofactor.

The protein resides in the cytoplasm. The enzyme catalyses tRNA(Ile) + L-isoleucine + ATP = L-isoleucyl-tRNA(Ile) + AMP + diphosphate. In terms of biological role, catalyzes the attachment of isoleucine to tRNA(Ile). As IleRS can inadvertently accommodate and process structurally similar amino acids such as valine, to avoid such errors it has two additional distinct tRNA(Ile)-dependent editing activities. One activity is designated as 'pretransfer' editing and involves the hydrolysis of activated Val-AMP. The other activity is designated 'posttransfer' editing and involves deacylation of mischarged Val-tRNA(Ile). The sequence is that of Isoleucine--tRNA ligase from Campylobacter lari (strain RM2100 / D67 / ATCC BAA-1060).